Reading from the N-terminus, the 75-residue chain is Small ribosomal subunit protein bS18 (75 aa).

It belongs to the bacterial ribosomal protein bS18 family. Part of the 30S ribosomal subunit. Forms a tight heterodimer with protein bS6.

Binds as a heterodimer with protein bS6 to the central domain of the 16S rRNA, where it helps stabilize the platform of the 30S subunit. This is Small ribosomal subunit protein bS18 from Methylobacillus flagellatus (strain ATCC 51484 / DSM 6875 / VKM B-1610 / KT).